The sequence spans 214 residues: Alkaline phosphatase-like protein (214 aa).

Helical transmembrane passes span 48–68 (LGIIGMIIAATIGSVLGALIL), 141–161 (FLILTTLGTLIWNIVLVCLGA), and 177–197 (YSSVVVVILGIIFILAILIFV).

This sequence belongs to the DedA family.

It is found in the cell membrane. The chain is Alkaline phosphatase-like protein (apl) from Lactococcus lactis subsp. lactis (strain IL1403) (Streptococcus lactis).